A 233-amino-acid chain; its full sequence is Large ribosomal subunit protein uL1 (233 aa).

Belongs to the universal ribosomal protein uL1 family. As to quaternary structure, part of the 50S ribosomal subunit.

In terms of biological role, binds directly to 23S rRNA. The L1 stalk is quite mobile in the ribosome, and is involved in E site tRNA release. Functionally, protein L1 is also a translational repressor protein, it controls the translation of the L11 operon by binding to its mRNA. The protein is Large ribosomal subunit protein uL1 of Shewanella sediminis (strain HAW-EB3).